A 377-amino-acid chain; its full sequence is Chaperone protein DnaJ (377 aa).

One can recognise a J domain in the interval 5–70 (DYYEVLGVAK…QKRAAYDRYG (66 aa)). A CR-type zinc finger spans residues 137–215 (GFDTEIRVPS…CDGVGRTRRN (79 aa)). C150, C153, C167, C170, C189, C192, C203, and C206 together coordinate Zn(2+). CXXCXGXG motif repeat units lie at residues 150-157 (CDTCHGSG), 167-174 (CRTCGGSG), 189-196 (CPTCHGTG), and 203-210 (CPSCDGVG).

The protein belongs to the DnaJ family. In terms of assembly, homodimer. Zn(2+) is required as a cofactor.

The protein resides in the cytoplasm. Participates actively in the response to hyperosmotic and heat shock by preventing the aggregation of stress-denatured proteins and by disaggregating proteins, also in an autonomous, DnaK-independent fashion. Unfolded proteins bind initially to DnaJ; upon interaction with the DnaJ-bound protein, DnaK hydrolyzes its bound ATP, resulting in the formation of a stable complex. GrpE releases ADP from DnaK; ATP binding to DnaK triggers the release of the substrate protein, thus completing the reaction cycle. Several rounds of ATP-dependent interactions between DnaJ, DnaK and GrpE are required for fully efficient folding. Also involved, together with DnaK and GrpE, in the DNA replication of plasmids through activation of initiation proteins. The sequence is that of Chaperone protein DnaJ from Bordetella parapertussis (strain 12822 / ATCC BAA-587 / NCTC 13253).